The sequence spans 257 residues: NAD-capped RNA hydrolase NudC (257 aa).

2 residues coordinate substrate: lysine 25 and arginine 69. Positions 98 and 101 each coordinate Zn(2+). Glutamate 111 serves as a coordination point for substrate. Residues cysteine 116 and cysteine 119 each contribute to the Zn(2+) site. Substrate is bound at residue tyrosine 124. A Nudix hydrolase domain is found at 125 to 248; that stretch reads PQIAPCIIVA…TVARRLIEDT (124 aa). Positions 158, 174, and 178 each coordinate a divalent metal cation. A Nudix box motif is present at residues 159-180; that stretch reads GFVEVGETLEQAVAREVMEESG. 192-199 provides a ligand contact to substrate; the sequence is QPWPFPQS. Position 219 (glutamate 219) interacts with a divalent metal cation. Alanine 241 is a binding site for substrate.

It belongs to the Nudix hydrolase family. NudC subfamily. As to quaternary structure, homodimer. Mg(2+) is required as a cofactor. Mn(2+) serves as cofactor. Requires Zn(2+) as cofactor.

It catalyses the reaction a 5'-end NAD(+)-phospho-ribonucleoside in mRNA + H2O = a 5'-end phospho-adenosine-phospho-ribonucleoside in mRNA + beta-nicotinamide D-ribonucleotide + 2 H(+). The enzyme catalyses NAD(+) + H2O = beta-nicotinamide D-ribonucleotide + AMP + 2 H(+). It carries out the reaction NADH + H2O = reduced beta-nicotinamide D-ribonucleotide + AMP + 2 H(+). Functionally, mRNA decapping enzyme that specifically removes the nicotinamide adenine dinucleotide (NAD) cap from a subset of mRNAs by hydrolyzing the diphosphate linkage to produce nicotinamide mononucleotide (NMN) and 5' monophosphate mRNA. The NAD-cap is present at the 5'-end of some mRNAs and stabilizes RNA against 5'-processing. Has preference for mRNAs with a 5'-end purine. Catalyzes the hydrolysis of a broad range of dinucleotide pyrophosphates. The sequence is that of NAD-capped RNA hydrolase NudC from Escherichia coli O7:K1 (strain IAI39 / ExPEC).